Consider the following 431-residue polypeptide: Arginine biosynthesis bifunctional protein ArgJ, mitochondrial (431 aa).

Substrate-binding residues include threonine 174, lysine 200, threonine 211, glutamate 297, asparagine 426, and threonine 431. Threonine 211 acts as the Nucleophile in catalysis.

The protein belongs to the ArgJ family. As to quaternary structure, heterodimer of an alpha and a beta chain. Post-translationally, the alpha and beta chains are autoproteolytically processed from a single precursor protein within the mitochondrion.

The protein resides in the mitochondrion matrix. The enzyme catalyses N(2)-acetyl-L-ornithine + L-glutamate = N-acetyl-L-glutamate + L-ornithine. It catalyses the reaction L-glutamate + acetyl-CoA = N-acetyl-L-glutamate + CoA + H(+). The protein operates within amino-acid biosynthesis; L-arginine biosynthesis; L-ornithine and N-acetyl-L-glutamate from L-glutamate and N(2)-acetyl-L-ornithine (cyclic): step 1/1. Its pathway is amino-acid biosynthesis; L-arginine biosynthesis; N(2)-acetyl-L-ornithine from L-glutamate: step 1/4. Functionally, catalyzes two activities which are involved in the cyclic version of arginine biosynthesis: the synthesis of acetylglutamate from glutamate and acetyl-CoA, and of ornithine by transacetylation between acetylornithine and glutamate. This chain is Arginine biosynthesis bifunctional protein ArgJ, mitochondrial, found in Yarrowia lipolytica (strain CLIB 122 / E 150) (Yeast).